A 147-amino-acid polypeptide reads, in one-letter code: Nucleoside diphosphate kinase (147 aa).

ATP is bound by residues Lys9, Phe57, Arg85, Thr91, Arg102, and Asn112. His115 (pros-phosphohistidine intermediate) is an active-site residue.

It belongs to the NDK family. In terms of assembly, homotetramer. It depends on Mg(2+) as a cofactor.

It is found in the cytoplasm. It catalyses the reaction a 2'-deoxyribonucleoside 5'-diphosphate + ATP = a 2'-deoxyribonucleoside 5'-triphosphate + ADP. The enzyme catalyses a ribonucleoside 5'-diphosphate + ATP = a ribonucleoside 5'-triphosphate + ADP. In terms of biological role, major role in the synthesis of nucleoside triphosphates other than ATP. The ATP gamma phosphate is transferred to the NDP beta phosphate via a ping-pong mechanism, using a phosphorylated active-site intermediate. This chain is Nucleoside diphosphate kinase, found in Listeria monocytogenes serotype 4a (strain HCC23).